The following is a 152-amino-acid chain: Small ribosomal subunit protein uS19x (152 aa).

Belongs to the universal ribosomal protein uS19 family.

The protein resides in the cytoplasm. The sequence is that of Small ribosomal subunit protein uS19x (RPS15D) from Arabidopsis thaliana (Mouse-ear cress).